Here is a 476-residue protein sequence, read N- to C-terminus: BTB/POZ domain-containing protein KCTD8 (476 aa).

The 79-residue stretch at 44–122 (EVVELNVGGQ…LRDKQLALPE (79 aa)) folds into the BTB domain. Ser-78 carries the phosphoserine modification. Arg-80 is modified (omega-N-methylarginine). The segment at 331 to 412 (SPKQEHEDRK…WMPPPDKRRN (82 aa)) is disordered. The span at 333 to 349 (KQEHEDRKRDKVTDKGS) shows a compositional bias: basic and acidic residues. The span at 350–391 (ESGTSCNELSTSSCDSHSEASTPQDNPANTQQAAAHQPNTLT) shows a compositional bias: polar residues. At Ser-413 the chain carries Phosphoserine.

In terms of assembly, interacts as a tetramer with GABBR1 and GABBR2.

It localises to the presynaptic cell membrane. The protein localises to the postsynaptic cell membrane. Its function is as follows. Auxiliary subunit of GABA-B receptors that determine the pharmacology and kinetics of the receptor response. Increases agonist potency and markedly alter the G-protein signaling of the receptors by accelerating onset and promoting desensitization. In Mus musculus (Mouse), this protein is BTB/POZ domain-containing protein KCTD8 (Kctd8).